Consider the following 435-residue polypeptide: ATP-dependent protease ATPase subunit HslU (435 aa).

Residues Ile-18, 60–65 (GVGKTE), Asp-248, Glu-313, and Arg-385 contribute to the ATP site.

The protein belongs to the ClpX chaperone family. HslU subfamily. A double ring-shaped homohexamer of HslV is capped on each side by a ring-shaped HslU homohexamer. The assembly of the HslU/HslV complex is dependent on binding of ATP.

The protein localises to the cytoplasm. ATPase subunit of a proteasome-like degradation complex; this subunit has chaperone activity. The binding of ATP and its subsequent hydrolysis by HslU are essential for unfolding of protein substrates subsequently hydrolyzed by HslV. HslU recognizes the N-terminal part of its protein substrates and unfolds these before they are guided to HslV for hydrolysis. The protein is ATP-dependent protease ATPase subunit HslU of Rhizobium etli (strain CIAT 652).